The chain runs to 314 residues: 3'-5' exoribonuclease YhaM (314 aa).

Residues 163-279 (HVVSMLDLAK…LHYIDNLDAK (117 aa)) enclose the HD domain.

Belongs to the YhaM family.

Functionally, shows a 3'-5' exoribonuclease activity. In Bacillus cereus (strain 03BB102), this protein is 3'-5' exoribonuclease YhaM.